A 369-amino-acid chain; its full sequence is Glutamate 5-kinase (369 aa).

Lysine 11 is an ATP binding site. Substrate-binding residues include serine 51, aspartate 138, and asparagine 150. ATP contacts are provided by residues 170–171 and 212–218; these read TD and TGGMATK. The region spanning 277-355 is the PUA domain; that stretch reads NGTIVIDDGA…QDIYAVLGYE (79 aa).

This sequence belongs to the glutamate 5-kinase family.

Its subcellular location is the cytoplasm. The catalysed reaction is L-glutamate + ATP = L-glutamyl 5-phosphate + ADP. It functions in the pathway amino-acid biosynthesis; L-proline biosynthesis; L-glutamate 5-semialdehyde from L-glutamate: step 1/2. Catalyzes the transfer of a phosphate group to glutamate to form L-glutamate 5-phosphate. The sequence is that of Glutamate 5-kinase from Aliivibrio salmonicida (strain LFI1238) (Vibrio salmonicida (strain LFI1238)).